Consider the following 245-residue polypeptide: Probable phosphatase YcdX (245 aa).

Residues His-7, His-9, His-15, His-40, Glu-73, His-101, His-131, Asp-192, and His-194 each contribute to the Zn(2+) site.

It belongs to the PHP family. In terms of assembly, homotrimer. Zn(2+) serves as cofactor.

The polypeptide is Probable phosphatase YcdX (Shigella flexneri serotype 5b (strain 8401)).